A 172-amino-acid polypeptide reads, in one-letter code: uncharacterized protein (172 aa).

Belongs to the flavoredoxin family. Requires FMN as cofactor.

This is an uncharacterized protein from Pyrococcus abyssi (strain GE5 / Orsay).